Consider the following 269-residue polypeptide: MTTLPRYAVFGNPVAHSKSPQIHRQFALQEGVDIEYERICADIGGFAQAVSTFFETGGCGANVTVPFKQEAFDLADEHSERALAAGAVNTLILLKNGKLRGDNTDGIGLANDITQVKNIAIEDKTILLLGAGGAVRGVIPVLKEHRPARIVITNRTHAKAEELARLFGIEAVPMADLNGGFDIIINGTSGGLSGQLPAVSPEIFRDCRLAYDMVYGEAALAFLNFAQSNGAAEVSDGLGMLVGQAAASYHIWRGFTPDIRPVIEYMKAL.

Residues 17–19 (SKS) and Thr64 contribute to the shikimate site. Lys68 functions as the Proton acceptor in the catalytic mechanism. Glu80 contributes to the NADP(+) binding site. Positions 89 and 105 each coordinate shikimate. Residues 130–134 (GAGGA), 154–159 (NRTHAK), and Met213 each bind NADP(+). Tyr215 contacts shikimate. Gly237 is a binding site for NADP(+).

Belongs to the shikimate dehydrogenase family. In terms of assembly, homodimer.

The catalysed reaction is shikimate + NADP(+) = 3-dehydroshikimate + NADPH + H(+). It participates in metabolic intermediate biosynthesis; chorismate biosynthesis; chorismate from D-erythrose 4-phosphate and phosphoenolpyruvate: step 4/7. In terms of biological role, involved in the biosynthesis of the chorismate, which leads to the biosynthesis of aromatic amino acids. Catalyzes the reversible NADPH linked reduction of 3-dehydroshikimate (DHSA) to yield shikimate (SA). This Neisseria flavescens protein is Shikimate dehydrogenase (NADP(+)).